We begin with the raw amino-acid sequence, 286 residues long: Citrullinase (286 aa).

The region spanning 4 to 258 is the CN hydrolase domain; the sequence is IKVAVVQLSF…DDILYATFDF (255 aa). The Proton acceptor role is filled by E43. The active site involves K116. The Nucleophile role is filled by C153.

It belongs to the carbon-nitrogen hydrolase superfamily.

It catalyses the reaction L-citrulline + H2O + 2 H(+) = L-ornithine + NH4(+) + CO2. Functionally, catalyzes the degradation of citrulline into ornithine, carbon dioxide and ammonia. Contributes to intramacrophage survival, in vivo growth and pathogenesis. In Francisella tularensis subsp. tularensis (strain SCHU S4 / Schu 4), this protein is Citrullinase.